A 283-amino-acid polypeptide reads, in one-letter code: Phosphatidylglycerol--prolipoprotein diacylglyceryl transferase (283 aa).

The next 3 membrane-spanning stretches (helical) occupy residues 17 to 37 (LAVR…TFLG), 56 to 76 (FLTW…VLFY), and 88 to 108 (IFKV…VVIA). R139 contributes to the a 1,2-diacyl-sn-glycero-3-phospho-(1'-sn-glycerol) binding site. A run of 2 helical transmembrane segments spans residues 222–242 (GQVA…AEFA) and 255–275 (GLSM…VGFV).

It belongs to the Lgt family.

It localises to the cell inner membrane. It catalyses the reaction L-cysteinyl-[prolipoprotein] + a 1,2-diacyl-sn-glycero-3-phospho-(1'-sn-glycerol) = an S-1,2-diacyl-sn-glyceryl-L-cysteinyl-[prolipoprotein] + sn-glycerol 1-phosphate + H(+). The protein operates within protein modification; lipoprotein biosynthesis (diacylglyceryl transfer). Its function is as follows. Catalyzes the transfer of the diacylglyceryl group from phosphatidylglycerol to the sulfhydryl group of the N-terminal cysteine of a prolipoprotein, the first step in the formation of mature lipoproteins. This is Phosphatidylglycerol--prolipoprotein diacylglyceryl transferase from Neisseria meningitidis serogroup B (strain ATCC BAA-335 / MC58).